We begin with the raw amino-acid sequence, 647 residues long: Threonine--tRNA ligase (647 aa).

The 61-residue stretch at 1 to 61 (MIKITFPDGA…EEDGSIEIVT (61 aa)) folds into the TGS domain. Residues 240–538 (DHRKLGKELD…LIETYKGAFP (299 aa)) are catalytic. Cysteine 334, histidine 385, and histidine 515 together coordinate Zn(2+).

It belongs to the class-II aminoacyl-tRNA synthetase family. In terms of assembly, homodimer. Zn(2+) serves as cofactor.

The protein localises to the cytoplasm. It catalyses the reaction tRNA(Thr) + L-threonine + ATP = L-threonyl-tRNA(Thr) + AMP + diphosphate + H(+). In terms of biological role, catalyzes the attachment of threonine to tRNA(Thr) in a two-step reaction: L-threonine is first activated by ATP to form Thr-AMP and then transferred to the acceptor end of tRNA(Thr). Also edits incorrectly charged L-seryl-tRNA(Thr). The polypeptide is Threonine--tRNA ligase (Streptococcus pyogenes serotype M18 (strain MGAS8232)).